We begin with the raw amino-acid sequence, 322 residues long: Atrochrysone carboxyl ACP thioesterase dmxR1 (322 aa).

Zn(2+)-binding residues include His-105, His-107, Asp-109, and His-110. The Proton donor/acceptor role is filled by Asp-109.

It belongs to the metallo-beta-lactamase superfamily. Zn(2+) is required as a cofactor.

The catalysed reaction is atrochrysone carboxyl-[ACP] + H2O = atrochrysone carboxylate + holo-[ACP] + H(+). It participates in secondary metabolite biosynthesis. Its function is as follows. Atrochrysone carboxyl ACP thioesterase; part of the gene cluster that mediates the biosynthesis of the dimeric xanthones cryptosporioptides. The pathway begins with the synthesis of atrochrysone thioester by the polyketide synthase dmx-nrPKS. The atrochrysone carboxyl ACP thioesterase dmxR1 then breaks the thioester bond and releases the atrochrysone carboxylic acid from dmx-nrPKS. Atrochrysone carboxylic acid is decarboxylated by the decarboxylase dmxR15, and oxidized by the anthrone oxygenase dmxR16 to yield emodin. Emodin is then reduced to emodin hydroquinone by the oxidoreductase dmxR7. A-ring reduction by the short chain dehydrogenase dmxR18, dehydration by the scytalone dehydratase-like protein dmxR17 and probable spontaneous re-oxidation, results in overall deoxygenation to chrysophanol. Baeyer-Villiger oxidation by the Baeyer-Villiger monooxygenase (BVMO) dmxR6 then yields monodictylactone in equilibrium with monodictyphenone. In the case of the cryptosporioptides biosynthesis, monodictylactone is reduced at C-12 to an alcohol (by the short chain dehydrogenases dmxR12 or dmxR8) and hydroxylated at C-5 by dmxR9, yielding the electron-rich aromatic which could eliminate H(2)O to form the ortho-quinonemethide, followed by tautomerisation to paraquinone and complete the formal reduction to produce the 10-methylgroup. Conjugate addition of C-4a-OH to the resulting paraquinone by the monooxygenase dmxR10 then gives cyclohexadienone, which is then reduced at C-5 by the short chain dehydrogenase dmxR3 to give the dihydroxanthone. The 6,7-epoxide in the cryptosporioptides could be introduced by the cytochrome P450 monooxygenase dmxL3. The highly reducing PKS dmxL2 manufactures butyrate, which is further carboxylated by dmxL1 to form ethylmalonate. It is not yet clear whether the carboxylation occurs while the butyrate is attached to the ACP of dmxL2, but this unusual fungal metabolite could then be esterified to O-5 by the O-acetyltransferase dmxR13. Finally, dimerization performed by dmxR5 gives the observed dimers cryptosporioptides A, B and C as the final products of the pathway. The polypeptide is Atrochrysone carboxyl ACP thioesterase dmxR1 (Cryptosporiopsis sp. (strain 8999)).